We begin with the raw amino-acid sequence, 581 residues long: Pre-mRNA 3'-end-processing factor FIP1 (581 aa).

Composition is skewed to basic and acidic residues over residues 1–10 and 32–42; these read MSAGEVERLV and VHVHSDLAKDL. 3 disordered regions span residues 1 to 95, 211 to 282, and 320 to 581; these read MSAG…EDDV, TVQQ…ESPD, and RSAT…APAE. The segment at 1–110 is sufficient for interaction with PAPOLA; it reads MSAGEVERLV…DIKTGAPQYG (110 aa). The tract at residues 1–332 is necessary for stimulating PAPOLA activity; that stretch reads MSAGEVERLV…TEVDNNFSKP (332 aa). Composition is skewed to acidic residues over residues 43-54 and 80-94; these read DENEVERPEEEN and TEDDSDSDSDDDEDD. Phosphoserine is present on residues serine 84, serine 86, and serine 88. A sufficient for interaction with CPSF4 region spans residues 136–219; sequence KGVDLDAPGS…ITVQQGRTGN (84 aa). A compositionally biased stretch (low complexity) spans 247 to 267; that stretch reads SRNSTSSQSQTSTASRKASSS. Over residues 271–282 the composition is skewed to basic and acidic residues; the sequence is WQDRYGRAESPD. A Phosphoserine modification is found at serine 280. Residues 320–330 show a composition bias toward polar residues; sequence RSATEVDNNFS. Pro residues predominate over residues 331-389; that stretch reads KPPPFFPPGAPPTHLPPPPFLPPPPTVSTAPPLIPPPGIPITVPPPGFPPPPGAPPPSL. At tyrosine 411 the chain carries Phosphotyrosine. Positions 419–435 are enriched in polar residues; it reads LTSSAPSWPSLVDTTKQ. The sufficient for interaction with CPSF1 and CSTF3 stretch occupies residues 428-581; it reads SLVDTTKQWD…QESTEAAPAE (154 aa). The segment covering 439 to 479 has biased composition (basic and acidic residues); it reads YARREKDRDRDRERDRDRERERDRDRERERTRERERERDHS. The arg/Asp/Glu-rich domain stretch occupies residues 442–477; the sequence is REKDRDRDRERDRDRERERDRDRERERTRERERERD. The tract at residues 478 to 535 is sufficient for interaction with AHCYL1; the sequence is HSPTPSVFNSDEERYRYREYAERGYERHRASREKEERHRERRHREKEETRHKSSRSNS. Serine 479 carries the post-translational modification Phosphoserine. Threonine 481 is modified (phosphothreonine). Residues serine 483 and serine 487 each carry the phosphoserine modification. Over residues 488–515 the composition is skewed to basic and acidic residues; it reads DEERYRYREYAERGYERHRASREKEERH. A compositionally biased stretch (basic residues) spans 529 to 538; sequence KSSRSNSRRR. At serine 541 the chain carries Phosphoserine. Residues 547–557 are compositionally biased toward basic residues; it reads HRRHKHKKSKR.

It belongs to the FIP1 family. In terms of assembly, component of the cleavage and polyadenylation specificity factor (CPSF) complex, composed of CPSF1, CPSF2, CPSF3, CPSF4 and FIP1L1. Found in a complex with CPSF1, FIP1L1 and PAPOLA. Interacts with CPSF1, CPSF4, CSTF2 and CSTF3. Interacts with AHCYL1 (when phosphorylated); the interaction is direct and associates AHCYL1 with the CPSF complex and RNA. Interacts with PAPOLA; the interaction seems to be increased by the interaction with AHCYL1. Interacts with NUDT21/CPSF5; this interaction occurs in a RNA sequence-specific manner. Interacts (preferentially via unphosphorylated form and Arg/Glu/Asp-rich domain) with CPSF6 (via Arg/Ser-rich domain); this interaction mediates, at least in part, the interaction between the CFIm and CPSF complexes and may be inhibited by CPSF6 hyper-phosphorylation. Interacts (preferentially via unphosphorylated form and Arg/Asp/Glu-rich domain) with CPSF7 (via Arg/Ser-rich domain); this interaction mediates, at least in part, the interaction between the CFIm and CPSF complexes and may be inhibited by CPSF7 hyper-phosphorylation.

It localises to the nucleus. Functionally, component of the cleavage and polyadenylation specificity factor (CPSF) complex that plays a key role in pre-mRNA 3'-end formation, recognizing the AAUAAA signal sequence and interacting with poly(A) polymerase and other factors to bring about cleavage and poly(A) addition. FIP1L1 contributes to poly(A) site recognition and stimulates poly(A) addition. Binds to U-rich RNA sequence elements surrounding the poly(A) site. May act to tether poly(A) polymerase to the CPSF complex. In Mus musculus (Mouse), this protein is Pre-mRNA 3'-end-processing factor FIP1 (Fip1l1).